A 313-amino-acid chain; its full sequence is Malate dehydrogenase (313 aa).

11-16 (GAGHTG) contributes to the NAD(+) binding site. Substrate is bound by residues Arg-86 and Arg-92. Residues Asn-99 and 122 to 124 (LTN) contribute to the NAD(+) site. Substrate-binding residues include Asn-124 and Arg-155. The active-site Proton acceptor is the His-179.

Belongs to the LDH/MDH superfamily. MDH type 3 family.

It catalyses the reaction (S)-malate + NAD(+) = oxaloacetate + NADH + H(+). In terms of biological role, catalyzes the reversible oxidation of malate to oxaloacetate. The polypeptide is Malate dehydrogenase (Staphylococcus epidermidis (strain ATCC 35984 / DSM 28319 / BCRC 17069 / CCUG 31568 / BM 3577 / RP62A)).